Consider the following 166-residue polypeptide: Regulatory protein RecX (166 aa).

Belongs to the RecX family.

Its subcellular location is the cytoplasm. Its function is as follows. Modulates RecA activity. This is Regulatory protein RecX from Klebsiella pneumoniae subsp. pneumoniae (strain ATCC 700721 / MGH 78578).